The sequence spans 197 residues: Protein SYM1 (197 aa).

The next 4 membrane-spanning stretches (helical) occupy residues 20-40, 55-75, 97-117, and 137-157; these read AIMT…LFPT, AVIY…KILN, VDQL…MSIM, and LLTN…VVPL.

This sequence belongs to the peroxisomal membrane protein PXMP2/4 family.

The protein resides in the mitochondrion inner membrane. In terms of biological role, may be involved in cellular response to stress. Required to maintain mitochondrial DNA (mtDNA) integrity and stability. Required for ethanol metabolism and tolerance during heat shock. The chain is Protein SYM1 (SYM1) from Saccharomyces cerevisiae (strain ATCC 204508 / S288c) (Baker's yeast).